The following is a 1010-amino-acid chain: MAARVLIIGSGGREHTLAWKLAQSHHVKQVLVAPGNAGTACSEKISNTAISISDHTALAQFCKEKKIEFVVVGPEAPLAAGIVGNLRSAGVQCFGPTAEAAQLESSKRFAKEFMDRHGIPTAQWKAFTKPEEACSFILSADFPALVVKASGLAAGKGVIVAKSKEEACKAVQEIMQEKAFGAAGETIVIEELLDGEEVSCLCFTDGKTVAPMPPAQDHKRLLEGDGGPNTGGMGAYCPAPQVSNDLLLKIKDTVLQRTVDGMQQEGTPYTGILYAGIMLTKNGPKVLEFNCRFGDPECQVILPLLKSDLYEVIQSTLDGLLCTSLPVWLENHTALTVVMASKGYPGDYTKGVEITGFPEAQALGLEVFHAGTALKNGKVVTHGGRVLAVTAIRENLISALEEAKKGLAAIKFEGAIYRKDVGFRAIAFLQQPRSLTYKESGVDIAAGNMLVKKIQPLAKATSRSGCKVDLGGFAGLFDLKAAGFKDPLLASGTDGVGTKLKIAQLCNKHDTIGQDLVAMCVNDILAQGAEPLFFLDYFSCGKLDLSVTEAVVAGIAKACGKAGCALLGGETAEMPDMYPPGEYDLAGFAVGAMERDQKLPHLERITEGDVVVGIASSGLHSNGFSLVRKIVAKSSLQYSSPAPDGCGDQTLGDLLLTPTRIYSHSLLPVLRSGHVKAFAHITGGGLLENIPRVLPEKLGVDLDAQTWRIPRVFSWLQQEGHLSEEEMARTFNCGVGAVLVVSKEQTEQILRDIQQHKEEAWVIGSVVARAEGSPRVKVKNLIESMQINGSVLKNGSLTNHFSFEKKKARVAVLISGTGSNLQALIDSTREPNSSAQIDIVISNKAAVAGLDKAERAGIPTRVINHKLYKNRVEFDSAIDLVLEEFSIDIVCLAGFMRILSGPFVQKWNGKMLNIHPSLLPSFKGSNAHEQALETGVTVTGCTVHFVAEDVDAGQIILQEAVPVKRGDTVATLSERVKLAEHKIFPAALQLVASGTVQLGENGKICWVKEE.

At alanine 2 the chain carries N-acetylalanine. Serine 10 bears the Phosphoserine mark. Residues 111-318 (KEFMDRHGIP…LYEVIQSTLD (208 aa)) form the ATP-grasp domain. Residues 190–193 (EELL), glutamate 197, arginine 220, and asparagine 229 contribute to the ATP site. Mg(2+) contacts are provided by glutamate 288 and asparagine 290. Residue lysine 350 is modified to N6-acetyllysine. The interval 434–809 (SLTYKESGVD…HFSFEKKKAR (376 aa)) is AIRS domain. Serine 440 carries the phosphoserine modification. Threonine 682 bears the Phosphothreonine mark. Serine 796 and serine 802 each carry phosphoserine. Residues 810-1010 (VAVLISGTGS…NGKICWVKEE (201 aa)) form a GART domain region. Residue 818–820 (GSN) participates in N(1)-(5-phospho-beta-D-ribosyl)glycinamide binding. Residues arginine 871, 896–899 (MRIL), and asparagine 913 contribute to the (6R)-10-formyltetrahydrofolate site. The active-site Proton donor is histidine 915. 947–951 (AEDVD) provides a ligand contact to (6R)-10-formyltetrahydrofolate. A N(1)-(5-phospho-beta-D-ribosyl)glycinamide-binding site is contributed by 977–980 (KLAE).

It in the N-terminal section; belongs to the GARS family. This sequence in the central section; belongs to the AIR synthase family. In the C-terminal section; belongs to the GART family. Homodimer. It depends on Mg(2+) as a cofactor. Mn(2+) serves as cofactor.

It carries out the reaction 5-phospho-beta-D-ribosylamine + glycine + ATP = N(1)-(5-phospho-beta-D-ribosyl)glycinamide + ADP + phosphate + H(+). The catalysed reaction is N(1)-(5-phospho-beta-D-ribosyl)glycinamide + (6R)-10-formyltetrahydrofolate = N(2)-formyl-N(1)-(5-phospho-beta-D-ribosyl)glycinamide + (6S)-5,6,7,8-tetrahydrofolate + H(+). It catalyses the reaction 2-formamido-N(1)-(5-O-phospho-beta-D-ribosyl)acetamidine + ATP = 5-amino-1-(5-phospho-beta-D-ribosyl)imidazole + ADP + phosphate + H(+). The protein operates within purine metabolism; IMP biosynthesis via de novo pathway; 5-amino-1-(5-phospho-D-ribosyl)imidazole from N(2)-formyl-N(1)-(5-phospho-D-ribosyl)glycinamide: step 2/2. Its pathway is purine metabolism; IMP biosynthesis via de novo pathway; N(1)-(5-phospho-D-ribosyl)glycinamide from 5-phospho-alpha-D-ribose 1-diphosphate: step 2/2. It participates in purine metabolism; IMP biosynthesis via de novo pathway; N(2)-formyl-N(1)-(5-phospho-D-ribosyl)glycinamide from N(1)-(5-phospho-D-ribosyl)glycinamide (10-formyl THF route): step 1/1. Trifunctional enzyme that catalyzes three distinct reactions as part of the 'de novo' inosine monophosphate biosynthetic pathway. The protein is Trifunctional purine biosynthetic protein adenosine-3 (GART) of Homo sapiens (Human).